The primary structure comprises 568 residues: MARVEL domain-containing protein 2 (568 aa).

2 disordered regions span residues 1-72 and 116-163; these read MSGG…YPSD and SGGV…SYNS. Over 1 to 211 the chain is Cytoplasmic; sequence MSGGGSSSGP…YMKSWAGLLR (211 aa). The span at 29–46 shows a compositional bias: basic and acidic residues; it reads ADPRHPETNLETLHDRDL. The span at 52 to 62 shows a compositional bias: pro residues; it reads PLPPPPLPLHP. The region spanning 205-379 is the MARVEL domain; sequence SWAGLLRILC…SAMVSLKLWR (175 aa). The helical transmembrane segment at 212-232 threads the bilayer; it reads ILCIVELLLGAAVFACVTAYI. Residues 233-266 are Extracellular-facing; the sequence is HKDNEWYNMFGYSQPYGYTASMQGGYYYSGPKTP. A helical transmembrane segment spans residues 267–287; sequence FVLVVAGLAWIVTIILLVLGM. The Cytoplasmic segment spans residues 288–303; that stretch reads SMYYRTILLDSTWWPL. The helical transmembrane segment at 304–324 threads the bilayer; that stretch reads TEFGINISLFILYMAGAIVYV. Over 325–354 the chain is Extracellular; that stretch reads NDTNRGGLCYYQLFNTPVNASFCRVEGGQT. The chain crosses the membrane as a helical span at residues 355-375; sequence AAIIFLFVSMLMYFISAMVSL. Over 376-568 the chain is Cytoplasmic; sequence KLWRHESARK…KVMDWNDGYN (193 aa). One can recognise an OCEL domain in the interval 451 to 562; the sequence is PDYVAKYQAI…RIQEYDKVMD (112 aa). A coiled-coil region spans residues 462-559; that stretch reads AEDERERYKA…IKQRIQEYDK (98 aa).

Belongs to the ELL/occludin family.

It localises to the cell membrane. The protein localises to the cell junction. It is found in the tight junction. May play a role in the formation of the epithelial barrier. The chain is MARVEL domain-containing protein 2 (marveld2) from Xenopus tropicalis (Western clawed frog).